The following is an 80-amino-acid chain: uncharacterized protein (80 aa).

The next 2 membrane-spanning stretches (helical) occupy residues 15-35 (ALGL…LSGV) and 45-65 (WFEM…WAMV).

This sequence to H.influenzae HI_0974B.

It is found in the cell membrane. This is an uncharacterized protein from Escherichia coli (strain K12).